A 515-amino-acid polypeptide reads, in one-letter code: Nucleolar protein 58 (515 aa).

Residues 283-403 (IAPNLTALVG…VESRLSALEG (121 aa)) form the Nop domain. The segment at 423-515 (EARAYNADAD…KDKKSKKEKK (93 aa)) is disordered. Over residues 438 to 448 (VDSDDESDTEE) the composition is skewed to acidic residues. Basic residues-rich tracts occupy residues 455–470 (KKEKKEKKEKKDKKRK) and 484–515 (KKEKKEKKEKKEKKEKKEKKDKKDKKSKKEKK).

This sequence belongs to the NOP5/NOP56 family.

It is found in the nucleus. The protein localises to the nucleolus. Its function is as follows. Required for pre-18S rRNA processing. May bind microtubules. The chain is Nucleolar protein 58 (NOP58) from Scheffersomyces stipitis (strain ATCC 58785 / CBS 6054 / NBRC 10063 / NRRL Y-11545) (Yeast).